Reading from the N-terminus, the 945-residue chain is Soluble guanylate cyclase gcy-33 (945 aa).

Residue H104 participates in heme binding. Residues 388-413 adopt a coiled-coil conformation; the sequence is SEVLTEMTREISEAKKTARTLLTQMM. Positions 437-567 constitute a Guanylate cyclase domain; sequence SIGFIRVCDF…DTVNTASRME (131 aa). Disordered stretches follow at residues 639–679 and 706–930; these read KEAE…LSGS and QDEN…KCED. Low complexity predominate over residues 661-679; that stretch reads SLGESIDSSSSRRGSLSGS. A compositionally biased stretch (polar residues) spans 711–720; it reads RPPTWSASHS. The segment covering 721–731 has biased composition (basic and acidic residues); it reads QDIRKPRKTES. Over residues 732–744 the composition is skewed to polar residues; that stretch reads KITLNSRLSSSDL. Basic and acidic residues-rich tracts occupy residues 750–759 and 766–804; these read ETSKDSDGET and ELKE…DHVS. The stretch at 763–802 forms a coiled coil; the sequence is TSSELKEVNRIREEALAQEKEEERTTKEENQKIEEVGEDH. Residues 817–828 are compositionally biased toward polar residues; it reads GDNNISFSQMPS. A compositionally biased stretch (basic and acidic residues) spans 851 to 861; sequence ISKKKLEKEDS. The span at 862–884 shows a compositional bias: polar residues; that stretch reads NSSMSSLDERTTVSAKPTTTRRL. Over residues 886–896 the composition is skewed to basic and acidic residues; that stretch reads NQKDLEKEKKR. The span at 898–911 shows a compositional bias: low complexity; that stretch reads SMAGSSVTSSSAHS. Over residues 916–930 the composition is skewed to basic and acidic residues; sequence SKKDTRDKSRCKCED.

Belongs to the adenylyl cyclase class-4/guanylyl cyclase family. Heterodimer; with other soluble guanylate cyclases. Heme is required as a cofactor. In terms of tissue distribution, expressed in BAG sensory neuron.

The protein resides in the cytoplasm. The catalysed reaction is GTP = 3',5'-cyclic GMP + diphosphate. Its activity is regulated as follows. May be regulated by molecular oxygen. Probably not activated by nitric oxide (NO). Functionally, synthesizes cyclic GMP (cGMP) from GTP. May be involved in sensitivity to quinine by regulating egl-4 activity through the production of cGMP. In Caenorhabditis elegans, this protein is Soluble guanylate cyclase gcy-33 (gcy-33).